A 292-amino-acid chain; its full sequence is Protease HtpX (292 aa).

2 helical membrane passes run 5–25 (IFLF…VMSL) and 34–54 (SGLL…SLLL). His-140 contacts Zn(2+). Residue Glu-141 is part of the active site. A Zn(2+)-binding site is contributed by His-144. 2 consecutive transmembrane segments (helical) span residues 155-175 (LLQG…GGII) and 193-213 (IIVF…AMWF). Glu-218 contacts Zn(2+).

Belongs to the peptidase M48B family. It depends on Zn(2+) as a cofactor.

The protein resides in the cell inner membrane. The protein is Protease HtpX of Xanthomonas euvesicatoria pv. vesicatoria (strain 85-10) (Xanthomonas campestris pv. vesicatoria).